Consider the following 276-residue polypeptide: 2-dehydro-3-deoxyphosphooctonate aldolase (276 aa).

The protein belongs to the KdsA family.

The protein localises to the cytoplasm. The catalysed reaction is D-arabinose 5-phosphate + phosphoenolpyruvate + H2O = 3-deoxy-alpha-D-manno-2-octulosonate-8-phosphate + phosphate. The protein operates within carbohydrate biosynthesis; 3-deoxy-D-manno-octulosonate biosynthesis; 3-deoxy-D-manno-octulosonate from D-ribulose 5-phosphate: step 2/3. It participates in bacterial outer membrane biogenesis; lipopolysaccharide biosynthesis. In Xanthomonas euvesicatoria pv. vesicatoria (strain 85-10) (Xanthomonas campestris pv. vesicatoria), this protein is 2-dehydro-3-deoxyphosphooctonate aldolase.